The sequence spans 502 residues: Cytochrome P450 monooxygenase verC (502 aa).

The helical transmembrane segment at 9–29 (IAALPMVSLLGAALIVVSVLG) threads the bilayer. N-linked (GlcNAc...) asparagine glycans are attached at residues Asn124, Asn190, Asn271, and Asn342. Cys444 provides a ligand contact to heme.

The protein belongs to the cytochrome P450 family. Heme serves as cofactor.

It localises to the membrane. It functions in the pathway mycotoxin biosynthesis. In terms of biological role, cytochrome P450 monooxygenase; part of the gene cluster that mediates the biosynthesis of 11'-deoxyverticillin A, one of the dimeric epipolythiodioxopiperazines (ETPs) from the verticillin family that act as mycotoxins. 11'-deoxyverticillin A is required for normal conidiation. The nonribosomal peptide synthetase verP is speculated to be responsible for condensation of amino acids to form the carbon skeleton of verticillin, whereas the cluster-specific tailoring enzymes are involved in further modifications leading to the production of 11'-deoxyverticillin A. The protein is Cytochrome P450 monooxygenase verC of Clonostachys rogersoniana.